Consider the following 390-residue polypeptide: MSRVIWIVIDSVGIGALPDAEKFGDSKDVSTLGNIFKEYPDIQIPNMRNLGIGNIDGIDFFESIKEPIGCFGKCKEMSQGKDTTTGHWEMTGIIVDKPFKTFEHGFSKEIIEEFEKKTGRKVVGNKPASGTVIIDEYGEHQIKTGDVIVYTSADSVFQIAANEEVIPLEELYNMCKIAREIMMGDNAVARVIARPFIGKKKGEFVRTSNRRDYSLDPFEPTVLDNIKESGLDVLAVGKIEDIFNGKGITDAIHTKSNMDGVDETLNYMKQDNKGLIYSNLVDFDSKYGHRRDPEGYKKALEEFDSRLPEIMANMREDDILIINADHGNDPTYKGTDHTREYIPVMIYGNKIKKGFNLGVKDTFADIGATVADILNVKLPKHGSSFKGDLF.

6 residues coordinate Mn(2+): Asp-10, Asp-284, His-289, Asp-325, His-326, and His-337.

This sequence belongs to the phosphopentomutase family. The cofactor is Mn(2+).

It is found in the cytoplasm. It carries out the reaction 2-deoxy-alpha-D-ribose 1-phosphate = 2-deoxy-D-ribose 5-phosphate. It catalyses the reaction alpha-D-ribose 1-phosphate = D-ribose 5-phosphate. It functions in the pathway carbohydrate degradation; 2-deoxy-D-ribose 1-phosphate degradation; D-glyceraldehyde 3-phosphate and acetaldehyde from 2-deoxy-alpha-D-ribose 1-phosphate: step 1/2. Functionally, isomerase that catalyzes the conversion of deoxy-ribose 1-phosphate (dRib-1-P) and ribose 1-phosphate (Rib-1-P) to deoxy-ribose 5-phosphate (dRib-5-P) and ribose 5-phosphate (Rib-5-P), respectively. The chain is Phosphopentomutase from Clostridioides difficile (strain 630) (Peptoclostridium difficile).